Reading from the N-terminus, the 342-residue chain is Sorting nexin-15 (342 aa).

One can recognise a PX domain in the interval 1–130 (MSRQAKDDFL…EFFRGGEVTR (130 aa)). Positions 51, 53, 87, and 96 each coordinate a 1,2-diacyl-sn-glycero-3-phospho-(1D-myo-inositol-3-phosphate). R105 carries the post-translational modification Omega-N-methylarginine. Residues S201 and S227 each carry the phosphoserine modification. Positions 245–267 (DQEPWEPGGQEEEEDGEGGPTPA) are disordered. An MIT domain is found at 265–342 (TPAYLSQATE…LRLHLSQLPP (78 aa)).

It belongs to the sorting nexin family. In terms of assembly, homodimer. Interacts with SNX1, SNX2 and SNX4. Widely expressed.

It localises to the cytoplasm. The protein localises to the membrane. Its subcellular location is the cytoplasmic vesicle membrane. May be involved in several stages of intracellular trafficking. Overexpression of SNX15 disrupts the normal trafficking of proteins from the plasma membrane to recycling endosomes or the TGN. The sequence is that of Sorting nexin-15 (SNX15) from Homo sapiens (Human).